The primary structure comprises 796 residues: Conidiophore development regulator abaA (796 aa).

The segment at residues Gly133–Asp207 is a DNA-binding region (TEA). The tract at residues Arg215 to Glu254 is disordered. A compositionally biased stretch (polar residues) spans His243–Tyr252. Residues Leu341–Met362 are leucine-zipper-like. Residues Glu612–Val643 are disordered. Over residues Asn629–Val643 the composition is skewed to polar residues.

This sequence belongs to the TEC1 family.

It localises to the nucleus. BrlA, abaA and wetA are pivotal regulators of conidiophore development and conidium maturation. They act individually and together to regulate their own expression and that of numerous other sporulation-specific gene. Controls temporal and spatial specificity in Aspergillus development. Directs the differentiation of phialides and is continuously required for maintenance of their function. Expression of abaA leads to activation of brlA and wetA, cessation of vegetative growth, and accentuated cellular vacuolization. Binds to the sequence 5'-CATTCY-3', where Y is a pyrimidine, making both major- and minor-groove contacts. Multiple abaA binding sites are present in the cis-acting regulatory regions of several developmentally controlled structural genes as well as those of the upstream regulatory gene brlA, the downstream regulatory gene wetA, and abaA itself. This chain is Conidiophore development regulator abaA, found in Emericella nidulans (strain FGSC A4 / ATCC 38163 / CBS 112.46 / NRRL 194 / M139) (Aspergillus nidulans).